The primary structure comprises 1541 residues: Multiple epidermal growth factor-like domains protein 6 (1541 aa).

The first 30 residues, Met1–Ala30, serve as a signal peptide directing secretion. The EMI domain occupies Met44 to Ser125. 15 disulfides stabilise this stretch: Cys48–Cys111, Cys77–Cys83, Cys110–Cys123, Cys128–Cys139, Cys133–Cys147, Cys149–Cys158, Cys165–Cys176, Cys172–Cys185, Cys187–Cys200, Cys242–Cys255, Cys248–Cys268, Cys270–Cys283, Cys289–Cys300, Cys296–Cys309, and Cys311–Cys324. An EGF-like 1 domain is found at Leu124–Gln159. The region spanning Asp161–Leu201 is the EGF-like 2; calcium-binding domain. EGF-like domains are found at residues Cys206–Cys242 and Asp238–Glu284. The N-linked (GlcNAc...) asparagine glycan is linked to Asn252. Residues Asp285 to Tyr325 enclose the EGF-like 5; calcium-binding domain. EGF-like domains follow at residues Cys335–Cys370 and Asp375–Glu411. The EGF-like 8; calcium-binding domain maps to Asp412–Ser452. Disulfide bonds link Cys416–Cys427, Cys423–Cys436, Cys438–Cys451, Cys520–Cys533, Cys527–Cys540, Cys542–Cys551, Cys564–Cys576, Cys570–Cys583, Cys585–Cys594, Cys607–Cys619, Cys613–Cys626, and Cys628–Cys637. EGF-like domains are found at residues Phe516–Asn552, Phe560–Glu595, Tyr603–His638, Phe736–Glu770, Gln783–Gln814, Tyr822–Gln857, Trp865–Glu901, Phe909–Glu944, Asp955–Ala987, Tyr995–Leu1030, Tyr1038–Glu1073, Val1081–Gln1116, Phe1124–Glu1159, Tyr1211–Asn1246, Phe1254–Glu1289, Phe1297–Glu1332, His1345–Glu1375, His1383–Glu1418, and Phe1469–Arg1504. Asn739 carries N-linked (GlcNAc...) asparagine glycosylation. Intrachain disulfides connect Cys740–Cys751, Cys744–Cys758, Cys760–Cys769, Cys786–Cys795, Cys789–Cys802, Cys804–Cys813, Cys826–Cys838, Cys832–Cys845, Cys847–Cys856, Cys869–Cys882, Cys873–Cys889, Cys891–Cys900, Cys913–Cys925, Cys919–Cys932, and Cys934–Cys943. 30 cysteine pairs are disulfide-bonded: Cys999-Cys1011, Cys1005-Cys1018, Cys1020-Cys1029, Cys1042-Cys1054, Cys1048-Cys1061, Cys1063-Cys1072, Cys1085-Cys1097, Cys1091-Cys1104, Cys1106-Cys1115, Cys1128-Cys1140, Cys1134-Cys1147, Cys1149-Cys1158, Cys1215-Cys1227, Cys1221-Cys1234, Cys1236-Cys1245, Cys1258-Cys1270, Cys1264-Cys1277, Cys1279-Cys1288, Cys1301-Cys1313, Cys1307-Cys1320, Cys1322-Cys1331, Cys1348-Cys1356, Cys1350-Cys1363, Cys1365-Cys1374, Cys1387-Cys1399, Cys1393-Cys1406, Cys1408-Cys1417, Cys1473-Cys1485, Cys1479-Cys1492, and Cys1494-Cys1503. The segment at Leu1509–His1541 is disordered. Positions Ser1516–Ser1535 are enriched in polar residues.

The protein localises to the secreted. The protein is Multiple epidermal growth factor-like domains protein 6 (MEGF6) of Homo sapiens (Human).